The sequence spans 566 residues: Mannitol 2-dehydrogenase (566 aa).

NAD(+) is bound at residue 106–117 (IVHVGVGGFHRA).

Belongs to the mannitol dehydrogenase family. Monomer.

It carries out the reaction D-mannitol + NAD(+) = D-fructose + NADH + H(+). Catalyzes the NAD(H)-dependent interconversion of D-fructose and D-mannitol in the mannitol metabolic pathway. The polypeptide is Mannitol 2-dehydrogenase (Pyrenophora tritici-repentis (strain Pt-1C-BFP) (Wheat tan spot fungus)).